The primary structure comprises 1138 residues: Envelopment polyprotein (1138 aa).

A signal peptide spans 1–18; the sequence is MEGWYLVVLGVCYTLTLA. Residues 19–487 lie on the Lumenal side of the membrane; sequence MPKTIYELKM…CVPGLHGWAT (469 aa). 11 disulfides stabilise this stretch: Cys30-Cys155, Cys64-Cys161, Cys113-Cys132, Cys137-Cys142, Cys179-Cys189, Cys214-Cys250, Cys239-Cys354, Cys379-Cys438, Cys383-Cys392, Cys408-Cys427, and Cys455-Cys478. N-linked (GlcNAc...) asparagine; by host glycosylation occurs at Asn138. Asn350 carries an N-linked (GlcNAc...) asparagine; by host glycan. Asn402 carries an N-linked (GlcNAc...) asparagine; by host glycan. The chain crosses the membrane as a helical span at residues 488–508; sequence VMLLSTFCFGWVLIPAVTLII. Topologically, residues 509–630 are cytoplasmic; that stretch reads LKCLRVLTFS…LGVFRYKSRC (122 aa). The interval 519 to 536 is binding to the ribonucleoprotein; the sequence is CSHYTNESKFKFILEKVK. 2 CCHC-type zinc fingers span residues 548-568 and 573-594; these read CDVC…RQSC and CPYC…YSIC. 3 binding to the ribonucleoprotein regions span residues 591-608, 595-606, and 614-628; these read YSIC…KKSL, KLTGRFQEALKK, and KKGC…RYKS. The interaction with host TRAF3 stretch occupies residues 610-637; that stretch reads KPEVKKGCYRTLGVFRYKSRCYVGLVWC. Residues 614-637 form the ITAM domain; it reads KKGCYRTLGVFRYKSRCYVGLVWC. Tyr618 and Tyr631 each carry phosphotyrosine. The short motif at 618 to 621 is the YxxL element; sequence YRTL. The chain crosses the membrane as a helical span at residues 631–651; that stretch reads YVGLVWCLLLTCEIVIWAASA. Topologically, residues 652 to 1107 are lumenal; it reads ETPLMESGWS…EWLLGILNGN (456 aa). 8 cysteine pairs are disulfide-bonded: Cys738–Cys773, Cys742–Cys780, Cys754–Cys887, Cys768–Cys898, Cys783–Cys906, Cys809–Cys818, Cys826–Cys835, and Cys866–Cys870. The fusion loop stretch occupies residues 760–780; it reads YQYETGWGCNPGDCPGVGTGC. Asn930 is a glycosylation site (N-linked (GlcNAc...) asparagine; by host). 5 cysteine pairs are disulfide-bonded: Cys972–Cys1002, Cys995–Cys1047, Cys1012–Cys1017, Cys1048–Cys1053, and Cys1087–Cys1091. Residues 1108–1128 form a helical membrane-spanning segment; the sequence is WIVVVVLVVILILSIIMFSVL. The segment at 1124–1138 is binding to the ribonucleoprotein; that stretch reads MFSVLCPRRGHKKTV. The Cytoplasmic portion of the chain corresponds to 1129 to 1138; the sequence is CPRRGHKKTV.

Belongs to the hantavirus envelope glycoprotein family. As to quaternary structure, homodimer. Homotetramer; forms heterotetrameric Gn-Gc spikes in the pre-fusion conformation. Interacts (via C-terminus) with the nucleoprotein. Interacts with host TUFM; this interaction contributes to the virus-induced degradation of mitochondria by autophagy, which leads to degradation of host MAVS and inhibition of type I interferon (IFN) responses. Interacts with host MAP1LC3B; this interaction contributes to the virus-induced degradation of mitochondria by autophagy, which leads to degradation of host MAVS and inhibition of type I interferon (IFN) responses. Interacts (via C-terminus) with host TRAF3; this interaction inhibits the formation of TRAF3-TBK1 complexes. In terms of assembly, homodimer. Homotetramer; forms heterotetrameric Gn-Gc spikes in the pre-fusion conformation. Homotrimer; forms homotrimer in the post-fusion conformation at acidic pH. Interacts (via C-terminus) with the nucleoprotein. Envelope polyprotein precursor is quickly cleaved in vivo just after synthesis, presumably by host signal peptidase.

The protein resides in the virion membrane. The protein localises to the host cell surface. It localises to the host Golgi apparatus membrane. Its subcellular location is the host endoplasmic reticulum membrane. It is found in the host mitochondrion. In terms of biological role, forms homotetramers with glycoprotein C at the surface of the virion. Attaches the virion to host cell receptors including integrin ITGAV/ITGB3. This attachment induces virion internalization possibly through clathrin-dependent endocytosis and dynamin-independent macropinocytosis. Mediates the assembly and budding of infectious virus particles through its interaction with the nucleocapsid protein and the viral genome. May dysregulate normal immune and endothelial cell responses through an ITAM motif. Translocates to mitochondria, binds to host TUFM and recruits MAP1LC3B. These interactions induce mitochondrial autophagy and therefore destruction of host MAVS leading to inhibition of type I interferon (IFN) responses. Concomitant breakdown of glycoprotein N is apparently prevented by the nucleoprotein that may inhibit Gn-stimulated autophagosome-lysosome fusion. Interacts with the viral genomic RNA. Inhibits the host RIG-I/TBK1 pathway by disrupting the formation of TBK1-TRAF3 complexes and downstream signaling responses required for IFN-beta transcription. Forms homotetramers with glycoprotein N at the surface of the virion. Attaches the virion to host cell receptors including integrin ITGAV/ITGB3. This attachment induces virion internalization predominantly through clathrin-dependent endocytosis. Class II fusion protein that promotes fusion of viral membrane with host endosomal membrane after endocytosis of the virion. The polypeptide is Envelopment polyprotein (GP) (Abrothrix longipilis (Long-haired grass mouse)).